Reading from the N-terminus, the 119-residue chain is Ribonuclease P protein component (119 aa).

This sequence belongs to the RnpA family. As to quaternary structure, consists of a catalytic RNA component (M1 or rnpB) and a protein subunit.

It carries out the reaction Endonucleolytic cleavage of RNA, removing 5'-extranucleotides from tRNA precursor.. Functionally, RNaseP catalyzes the removal of the 5'-leader sequence from pre-tRNA to produce the mature 5'-terminus. It can also cleave other RNA substrates such as 4.5S RNA. The protein component plays an auxiliary but essential role in vivo by binding to the 5'-leader sequence and broadening the substrate specificity of the ribozyme. In Listeria innocua serovar 6a (strain ATCC BAA-680 / CLIP 11262), this protein is Ribonuclease P protein component.